The primary structure comprises 561 residues: Alpha-1D adrenergic receptor (561 aa).

Topologically, residues 1–90 (MTFRDILSVT…VGGLVVSAQG (90 aa)) are extracellular. The tract at residues 10 to 71 (TFEGPRSSSS…SSTGEPGAAA (62 aa)) is disordered. Positions 21–56 (GGSGAGGGAGTVGPEGGAVGGVPGATGGGAVVGTGS) are enriched in gly residues. Asparagine 60 and asparagine 76 each carry an N-linked (GlcNAc...) asparagine glycan. Residues 91–115 (VGVGVFLAAFILTAVAGNLLVILSV) traverse the membrane as a helical segment. The Cytoplasmic segment spans residues 116–127 (ACNRHLQTVTNY). A helical transmembrane segment spans residues 128-153 (FIVNLAVADLLLSAAVLPFSATMEVL). Over 154–163 (GFWAFGRTFC) the chain is Extracellular. Residues 164–186 (DVWAAVDVLCCTASILSLCTISV) form a helical membrane-spanning segment. Over 187–207 (DRYVGVRHSLKYPAIMTERKA) the chain is Cytoplasmic. Residues 208-232 (AAILALLWAVALVVSVGPLLGWKEP) traverse the membrane as a helical segment. The Extracellular segment spans residues 233–245 (VPPDERFCGITEE). Residues 246 to 269 (VGYAIFSSVCSFYLPMAVIVVMYC) form a helical membrane-spanning segment. Over 270-342 (RVYVVARSTT…KFSREKKAAK (73 aa)) the chain is Cytoplasmic. A helical transmembrane segment spans residues 343-367 (TLAIVVGVFVLCWFPFFFVLPLGSL). At 368 to 374 (FPQLKPS) the chain is on the extracellular side. Residues 375-399 (EGVFKVIFWLGYFNSCVNPLIYPCS) form a helical membrane-spanning segment. Residues 400 to 561 (SREFKRAFLR…DYSNLRETDI (162 aa)) lie on the Cytoplasmic side of the membrane. Cysteine 413 is lipidated: S-palmitoyl cysteine. The segment at 452-481 (APLALTAHPGAGSADTPETQDSVSSSRKPA) is disordered. Positions 467-479 (TPETQDSVSSSRK) are enriched in polar residues.

It belongs to the G-protein coupled receptor 1 family. Adrenergic receptor subfamily. ADRA1D sub-subfamily. Interacts with FLNA (via filamin repeat 21); increases PKA-mediated phosphorylation of FLNA. Palmitoylated. Palmitoylation by ZDHHC21 may increase the expression of the receptor and regulate downstream signaling. Vas deferens, hippocampus, cerebral cortex, aorta, brain stem, heart and spleen.

It is found in the cell membrane. In terms of biological role, this alpha-adrenergic receptor mediates its effect through the influx of extracellular calcium. This is Alpha-1D adrenergic receptor (Adra1d) from Rattus norvegicus (Rat).